The chain runs to 549 residues: Chaperonin GroEL (549 aa).

Residues 29 to 32 (TAGP), Lys50, 86 to 90 (DGTTT), Gly418, and Asp499 each bind ATP.

This sequence belongs to the chaperonin (HSP60) family. In terms of assembly, forms a cylinder of 14 subunits composed of two heptameric rings stacked back-to-back. Interacts with the co-chaperonin GroES.

Its subcellular location is the cytoplasm. The enzyme catalyses ATP + H2O + a folded polypeptide = ADP + phosphate + an unfolded polypeptide.. Together with its co-chaperonin GroES, plays an essential role in assisting protein folding. The GroEL-GroES system forms a nano-cage that allows encapsulation of the non-native substrate proteins and provides a physical environment optimized to promote and accelerate protein folding. The protein is Chaperonin GroEL of Wolbachia sp. subsp. Drosophila simulans (strain wRi).